The chain runs to 1651 residues: Roundabout homolog 1 (1651 aa).

A signal peptide spans 1–25 (MKWKHLPLLVMISLLTLSKKHLLLA). Topologically, residues 26 to 897 (QLIPDPEDLE…QQISDVVKQP (872 aa)) are extracellular. The disordered stretch occupies residues 31 to 66 (PEDLERGNDNGTPAPTSDNDDNSLGYTGSRLRQEDF). Polar residues predominate over residues 39–56 (DNGTPAPTSDNDDNSLGY). 5 Ig-like C2-type domains span residues 68 to 164 (PRIV…ASLE), 170 to 257 (DDFR…ADVT), 262 to 346 (PSFV…ATLT), 351 to 446 (PHFV…LEVT), and 455 to 541 (PVIR…AYIE). Cys89 and Cys147 are disulfide-bonded. Asn160 carries an N-linked (GlcNAc...) asparagine glycan. 3 cysteine pairs are disulfide-bonded: Cys191/Cys240, Cys283/Cys330, and Cys372/Cys428. N-linked (GlcNAc...) asparagine glycosylation occurs at Asn463. Cys476 and Cys525 form a disulfide bridge. 3 consecutive Fibronectin type-III domains span residues 563–657 (APSK…TQDV), 676–773 (VVLH…TLEE), and 778–874 (PPRS…LDSH). Residues Asn790, Asn820, and Asn827 are each glycosylated (N-linked (GlcNAc...) asparagine). A helical membrane pass occupies residues 898–918 (AFIAGIGAACWIILMVFSIWL). The Cytoplasmic portion of the chain corresponds to 919–1651 (YRHRKKRNGL…NNEELEETES (733 aa)). Ser940 carries the post-translational modification Phosphoserine. A Phosphothreonine modification is found at Thr948. Residue Tyr1038 is modified to Phosphotyrosine. Ser1055 carries the phosphoserine modification. Position 1073 is a phosphotyrosine (Tyr1073). A disordered region spans residues 1086–1107 (NMNNGGGDSSEKHWKPPGQQKQ). Tyr1114 carries the phosphotyrosine modification. Disordered stretches follow at residues 1137–1337 (PYNH…ADME), 1352–1397 (EQTP…DGSF), and 1420–1651 (RRQM…ETES). The span at 1147–1163 (GGSYNSSDRGSSTSGSQ) shows a compositional bias: low complexity. Pro residues predominate over residues 1186-1196 (LPPPPAHPPPH). Residue Thr1240 is modified to Phosphothreonine. The span at 1255–1269 (YSHQSTATLTPSPQE) shows a compositional bias: polar residues. Residues 1281-1293 (DLGHMPHPPDRRR) show a composition bias toward basic and acidic residues. Over residues 1296–1307 (VSPPPPPRPISP) the composition is skewed to pro residues. A Phosphoserine modification is found at Ser1297. The segment covering 1322–1336 (MDTDAPEEEEDEADM) has biased composition (acidic residues). Low complexity predominate over residues 1384 to 1397 (SSGRSSVSSSDGSF). Residues 1438-1451 (PRPTSPVSTDSNMS) show a composition bias toward polar residues. Residues 1459–1470 (RPTKKQKHQPGH) are compositionally biased toward basic residues. Residues 1480-1490 (LPPPPVPPPAI) are compositionally biased toward pro residues. Basic and acidic residues-rich tracts occupy residues 1516–1541 (ARADRSSDRKGGSYKGREALDGRQVT) and 1549–1573 (DPREAQEQPNEGKARGTKTAKRDLP). Polar residues predominate over residues 1592-1601 (FPTSNNPRDP). Residues 1602–1614 (SSSSSMSSRGSGS) are compositionally biased toward low complexity. Over residues 1642–1651 (NNEELEETES) the composition is skewed to acidic residues.

Belongs to the immunoglobulin superfamily. ROBO family. In terms of assembly, homodimer. Dimerization is mediated by the extracellular domain and is independent of SLIT liganding. Interacts with SLIT1. Interacts with SLIT2. Interacts with FLRT3. Interacts with MYO9B (via Rho-GAP domain). Post-translationally, ubiquitinated. May be deubiquitinated by USP33. As to expression, expressed in embryonal brain and spinal cord.

It is found in the cell membrane. It localises to the cell projection. The protein localises to the axon. The protein resides in the endoplasmic reticulum-Golgi intermediate compartment membrane. Its function is as follows. Receptor for SLIT1 and SLIT2 that mediates cellular responses to molecular guidance cues in cellular migration, including axonal navigation at the ventral midline of the neural tube and projection of axons to different regions during neuronal development. Interaction with the intracellular domain of FLRT3 mediates axon attraction towards cells expressing NTN1. In axon growth cones, the silencing of the attractive effect of NTN1 by SLIT2 may require the formation of a ROBO1-DCC complex. Plays a role in the regulation of cell migration via its interaction with MYO9B; inhibits MYO9B-mediated stimulation of RHOA GTPase activity, and thereby leads to increased levels of active, GTP-bound RHOA. May be required for lung development. This Rattus norvegicus (Rat) protein is Roundabout homolog 1 (Robo1).